We begin with the raw amino-acid sequence, 252 residues long: Triosephosphate isomerase (252 aa).

A substrate-binding site is contributed by N10–K12. H96 serves as the catalytic Electrophile. Residue E168 is the Proton acceptor of the active site. Residues G174, S214, and G235 to G236 each bind substrate.

It belongs to the triosephosphate isomerase family. In terms of assembly, homodimer.

It is found in the cytoplasm. It catalyses the reaction D-glyceraldehyde 3-phosphate = dihydroxyacetone phosphate. The protein operates within carbohydrate biosynthesis; gluconeogenesis. It participates in carbohydrate degradation; glycolysis; D-glyceraldehyde 3-phosphate from glycerone phosphate: step 1/1. In terms of biological role, involved in the gluconeogenesis. Catalyzes stereospecifically the conversion of dihydroxyacetone phosphate (DHAP) to D-glyceraldehyde-3-phosphate (G3P). In Streptococcus pneumoniae serotype 2 (strain D39 / NCTC 7466), this protein is Triosephosphate isomerase.